The chain runs to 87 residues: Small ribosomal subunit protein uS17 (87 aa).

This sequence belongs to the universal ribosomal protein uS17 family. Part of the 30S ribosomal subunit.

One of the primary rRNA binding proteins, it binds specifically to the 5'-end of 16S ribosomal RNA. This chain is Small ribosomal subunit protein uS17, found in Endomicrobium trichonymphae.